The sequence spans 378 residues: MSHLDNGFRSLTLQRFPATDDVNPLQAWEAADEYLLQQLDDTEIRGPVLILNDAFGALSCALAEHKPYSIGDSYISELATRENLRLNGIDESSVKFLDSTADYLQQPGVVLIKVPKTLALLEQQLRALRKVVTSDTRIIAGAKARDIHTSTLELFEKVLGPTTTTLAWKKARLINCTFNEPPLADAPQTVSWKLEGTDWTIHNHANVFSRTGLDIGARFFMQHLPENLEGEIVDLGCGNGVIGLTLLDKNPQAKVVFVDESPMAVASSRMNVETNMPEALDRCEFMINNALSGVEPFRFNAVLCNPPFHQQHALTDNVAWEMFHHARRCLKINGELYIVANRHLDYFHKLKKIFGNCTTIATNNKFVVLKTVKLGRRR.

This sequence belongs to the methyltransferase superfamily. RlmG family.

Its subcellular location is the cytoplasm. It carries out the reaction guanosine(1835) in 23S rRNA + S-adenosyl-L-methionine = N(2)-methylguanosine(1835) in 23S rRNA + S-adenosyl-L-homocysteine + H(+). Specifically methylates the guanine in position 1835 (m2G1835) of 23S rRNA. The polypeptide is Ribosomal RNA large subunit methyltransferase G (Escherichia coli O9:H4 (strain HS)).